The primary structure comprises 71 residues: Translation initiation factor IF-1 (71 aa).

The 71-residue stretch at 1–71 (MSKDDLIQFT…LTKGRVIHRH (71 aa)) folds into the S1-like domain.

The protein belongs to the IF-1 family. As to quaternary structure, component of the 30S ribosomal translation pre-initiation complex which assembles on the 30S ribosome in the order IF-2 and IF-3, IF-1 and N-formylmethionyl-tRNA(fMet); mRNA recruitment can occur at any time during PIC assembly.

It localises to the cytoplasm. Functionally, one of the essential components for the initiation of protein synthesis. Stabilizes the binding of IF-2 and IF-3 on the 30S subunit to which N-formylmethionyl-tRNA(fMet) subsequently binds. Helps modulate mRNA selection, yielding the 30S pre-initiation complex (PIC). Upon addition of the 50S ribosomal subunit IF-1, IF-2 and IF-3 are released leaving the mature 70S translation initiation complex. The sequence is that of Translation initiation factor IF-1 from Rickettsia typhi (strain ATCC VR-144 / Wilmington).